The sequence spans 493 residues: Alpha-amylase-related protein (493 aa).

A signal peptide spans 1-19 (MFKFALTLTLCLAGSLSLA). At Gln20 the chain carries Pyrrolidone carboxylic acid. A disulfide bridge links Cys47 with Cys103. Ca(2+) contacts are provided by Asn117, Gln168, and Asp177. Cys156 and Cys170 are disulfide-bonded. Arg205 serves as a coordination point for chloride. Residue Asp207 is the Nucleophile of the active site. His211 is a binding site for Ca(2+). Glu244 (proton donor) is an active-site residue. Residues Asn307 and Arg342 each contribute to the chloride site. Intrachain disulfides connect Cys375–Cys381, Cys417–Cys440, and Cys447–Cys459.

Belongs to the glycosyl hydrolase 13 family. In terms of assembly, monomer. It depends on Ca(2+) as a cofactor. Chloride is required as a cofactor.

It localises to the secreted. The catalysed reaction is Endohydrolysis of (1-&gt;4)-alpha-D-glucosidic linkages in polysaccharides containing three or more (1-&gt;4)-alpha-linked D-glucose units.. The chain is Alpha-amylase-related protein (Amyrel) from Drosophila sechellia (Fruit fly).